A 104-amino-acid polypeptide reads, in one-letter code: NADH-quinone oxidoreductase subunit K (104 aa).

Helical transmembrane passes span 4–24 (VPAS…LFGA), 31–51 (VIVL…LVAF), and 67–87 (LFTM…LIAL).

The protein belongs to the complex I subunit 4L family. In terms of assembly, NDH-1 is composed of 14 different subunits. Subunits NuoA, H, J, K, L, M, N constitute the membrane sector of the complex.

It is found in the cell membrane. It catalyses the reaction a quinone + NADH + 5 H(+)(in) = a quinol + NAD(+) + 4 H(+)(out). Its function is as follows. NDH-1 shuttles electrons from NADH, via FMN and iron-sulfur (Fe-S) centers, to quinones in the respiratory chain. The immediate electron acceptor for the enzyme in this species is believed to be a menaquinone. Couples the redox reaction to proton translocation (for every two electrons transferred, four hydrogen ions are translocated across the cytoplasmic membrane), and thus conserves the redox energy in a proton gradient. The sequence is that of NADH-quinone oxidoreductase subunit K from Bacillus cereus (strain G9842).